Here is a 162-residue protein sequence, read N- to C-terminus: Precursor protein UG (162 aa).

Positions 1–19 (MERILLCFIVATLVAISMA) are cleaved as a signal peptide. A propeptide spanning residues 20 to 23 (NPRP) is cleaved from the precursor. 2 disulfide bridges follow: Cys-30–Cys-42 and Cys-33–Cys-49. Residues 56–59 (VPKP) constitute a propeptide that is removed on maturation. Disulfide bonds link Cys-66-Cys-78 and Cys-69-Cys-85. Positions 92 to 95 (VPKP) are excised as a propeptide. Disulfide bonds link Cys-102-Cys-114 and Cys-105-Cys-121. Residues 128–131 (VPKP) constitute a propeptide that is removed on maturation. 2 disulfide bridges follow: Cys-138–Cys-150 and Cys-141–Cys-157.

The protein belongs to the sea anemone BBH family.

The protein resides in the secreted. It localises to the nematocyst. Functionally, affects the ASIC3 channel (ACCN3) and produces analgesic effects. It produces a reversible inhibition effect on both the transient and the sustained current of human ASIC3 channels expressed in X.laevis oocytes. It completely blocks the transient component (IC(50)=10 uM) and partially (48%) inhibits the amplitude of the sustained component (IC(50)=1.44 uM). Using in vivo tests in mice, it reverses inflammatory and acid-induced pain. Its function is as follows. Does not affect the ASIC3 channel. Does not cause lethality or paralysis of noble crayfish (A.astacus) at a dose of 1 mg/kg. This Urticina grebelnyi (Painted anemone) protein is Precursor protein UG.